A 172-amino-acid polypeptide reads, in one-letter code: Bifunctional protein PyrR (172 aa).

The PRPP-binding signature appears at V93–T105.

The protein belongs to the purine/pyrimidine phosphoribosyltransferase family. PyrR subfamily. As to quaternary structure, homodimer and homohexamer; in equilibrium.

It catalyses the reaction UMP + diphosphate = 5-phospho-alpha-D-ribose 1-diphosphate + uracil. Functionally, regulates transcriptional attenuation of the pyrimidine nucleotide (pyr) operon by binding in a uridine-dependent manner to specific sites on pyr mRNA. This disrupts an antiterminator hairpin in the RNA and favors formation of a downstream transcription terminator, leading to a reduced expression of downstream genes. Also displays a weak uracil phosphoribosyltransferase activity which is not physiologically significant. This is Bifunctional protein PyrR from Streptococcus sanguinis (strain SK36).